We begin with the raw amino-acid sequence, 373 residues long: Gibberellin 3-beta-dioxygenase 2 (373 aa).

Residues 203 to 304 (MTATVHLNWY…RVSLGYFLGP (102 aa)) enclose the Fe2OG dioxygenase domain. Tyrosine 212 contributes to the 2-oxoglutarate binding site. 3 residues coordinate Fe cation: histidine 227, aspartate 229, and histidine 285. Residues arginine 295 and serine 297 each contribute to the 2-oxoglutarate site.

The protein belongs to the iron/ascorbate-dependent oxidoreductase family. Requires L-ascorbate as cofactor. It depends on Fe(2+) as a cofactor. Highly expressed in elongating leaves. Expressed in unopened flowers. Expressed at low levels in leaf blades, shoots, rachis, stems and young panicles.

It carries out the reaction gibberellin A20 + 2-oxoglutarate + O2 = gibberellin A1 + succinate + CO2. It functions in the pathway plant hormone biosynthesis; gibberellin biosynthesis. Its function is as follows. Catalyzes the 3-beta-hydroxylation of the inactive gibberellin precursors, leading to the formation of bioactive gibberellins. In vitro, converts the precursors GA20, GA5, GA44 and GA9 to the corresponding 3-beta-hydroxylated active products GA1, GA3, GA38 and GA4, respectively. Involved in the production of bioactive GA for vegetative growth and development. Controls the elongation of the vegetative shoot and plant height by the regulation of active gibberellin levels. This is Gibberellin 3-beta-dioxygenase 2 from Oryza sativa subsp. japonica (Rice).